Here is a 316-residue protein sequence, read N- to C-terminus: Spermidine synthase (316 aa).

Positions 25–262 (PGWFSEISPM…GVIGFMLCST (238 aa)) constitute a PABS domain. S-adenosyl 3-(methylsulfanyl)propylamine is bound at residue Gln56. A putrescine-binding site is contributed by Tyr86. Residues Gln87, Asp111, Glu131, 162 to 163 (DG), and Asp181 each bind S-adenosyl 3-(methylsulfanyl)propylamine. Residue Asp181 is the Proton acceptor of the active site. Residues 181-184 (DSSD) and Tyr250 each bind putrescine.

Belongs to the spermidine/spermine synthase family.

The catalysed reaction is S-adenosyl 3-(methylsulfanyl)propylamine + putrescine = S-methyl-5'-thioadenosine + spermidine + H(+). It participates in amine and polyamine biosynthesis; spermidine biosynthesis; spermidine from putrescine: step 1/1. The chain is Spermidine synthase from Coffea arabica (Arabian coffee).